The following is a 2175-amino-acid chain: Homeobox protein cut (2175 aa).

Disordered stretches follow at residues 139–170 (NLLANTNTPSPSPPLLSAEQQQQLQSSLQQSG) and 249–432 (GNVK…GQPA). Low complexity-rich tracts occupy residues 153-169 (LLSAEQQQQLQSSLQQS) and 249-268 (GNVKSGSTTSNANHTNSNNS). Positions 265–343 (SNNSHQDEEE…ENKDAGEASL (79 aa)) form a coiled coil. The segment covering 271–294 (DEEELDDEEEDEEEDEDEDDEEEN) has biased composition (acidic residues). A compositionally biased stretch (polar residues) spans 309–320 (QQETRTEPSATT). Positions 344–359 (NVSNNHNTTDSNNSCS) are enriched in low complexity. The span at 360 to 374 (RKNNNGGNESEQHVA) shows a compositional bias: polar residues. Residues 384 to 415 (NNNTNTSNNNNTSNTATSNTNNNNNNNSSSGN) are compositionally biased toward low complexity. Residues 433-499 (VLLAAKDKEI…NEALAEATAL (67 aa)) adopt a coiled-coil conformation. Positions 503–515 (ASTNNNNNSQSSD) are enriched in low complexity. 2 disordered regions span residues 503–600 (ASTN…KIKK) and 656–765 (ASDA…NTNA). Acidic residues predominate over residues 546–568 (AEDDEEDEDQAMLVDSEEAEDKP). Residues 673–696 (QQQHQHQQQHHQQQHLHQQHHHHL) are compositionally biased toward basic residues. Over residues 697–710 (QQQPNSGSNSNPAS) the composition is skewed to low complexity. Basic residues predominate over residues 714-735 (HHGHHLHGHGLLHPSSAHHLHH). Over residues 738–765 (TESNSNSSTPTAAGNNNGSNNSSSNTNA) the composition is skewed to low complexity. A DNA-binding region (CUT 1) is located at residues 877–964 (NMDKYANQAL…VMLLKSLIPK (88 aa)). Disordered regions lie at residues 1001–1083 (LMKQ…HDDQ) and 1197–1289 (QRSS…EFAA). 2 stretches are compositionally biased toward basic and acidic residues: residues 1009–1030 (QHREQERRSHGGEDSHSNEDSK) and 1062–1083 (QREREREQREREQQQRLRHDDQ). Residues 1056–1161 (EQAAAQQRER…QQQAAQAQAQ (106 aa)) are a coiled coil. Residues 1249-1282 (GAPPTAAPPTGGASSNSAAPSPLSNSILPPALSS) show a composition bias toward low complexity. A DNA-binding region (CUT 2) is located at residues 1330 to 1417 (QQQFDMFNNL…VHKLVASQYK (88 aa)). The stretch at 1463-1522 (AQAQHLMQQMQAAAMSAAMQQQQVAQAQQQAQQAQQAQQHLQQQAQQHLQQQQHLAQQQH) forms a coiled coil. A compositionally biased stretch (low complexity) spans 1507–1540 (AQQHLQQQQHLAQQQHPHQQHHQAAAAAAALHHQ). 6 disordered regions span residues 1507–1588 (AQQH…PMLM), 1695–1747 (ERRE…PSKK), 1803–1826 (QVPHGPAGQDNPIPSRESTSATPF), 1922–1955 (RSDDYQDDLELEGGGHNLSDNESLEGQEPEDKTT), 2069–2097 (KQEEDDDEEQSGSVNLDNEDNATSEQKLK), and 2113–2175 (SSTG…GWNY). A compositionally biased stretch (gly residues) spans 1564–1573 (AQPGGPGGNQ). The segment at residues 1608–1695 (YEMAALTQDL…VERLQLLKNE (88 aa)) is a DNA-binding region (CUT 3). Positions 1709 to 1732 (NQQDNSSDTSSNDTNDFYTSSPGP) are enriched in low complexity. The segment at residues 1745–1804 (SKKQRVLFSEEQKEALRLAFALDPYPNVGTIEFLANELGLATRTITNWFHNHRMRLKQQV) is a DNA-binding region (homeobox). A phosphoserine mark is found at Ser1940 and Ser1944. Pro residues predominate over residues 2126-2135 (PLAPPPPPPA). Low complexity predominate over residues 2136–2175 (ASSSIVSGESTTSSSSSSNTSSSTPAVTTAAATAAAGWNY).

Belongs to the CUT homeobox family. In terms of tissue distribution, detected in many cells in the central nervous system, all external sensory organs, some peripheral neurons, and in the non-neural cells of the spiracles and the Malpighian tubules.

Its subcellular location is the nucleus. In terms of biological role, regulator of cell fate decisions in multiple lineages. Specifically, functions as a determination factor that specifies sensory organ identity in precursor cells. Probably also involved in cell type specification of Malpighian tubules. In absence of cut gene external sensory organs are transformed into chordotonal organs. The polypeptide is Homeobox protein cut (ct) (Drosophila melanogaster (Fruit fly)).